The primary structure comprises 545 residues: CTP synthase (545 aa).

The segment at 1-266 (MTTNYIFVTG…DDYICKRFSL (266 aa)) is amidoligase domain. S14 is a CTP binding site. A UTP-binding site is contributed by S14. ATP is bound by residues 15–20 (SLGKGI) and D72. Mg(2+) is bound by residues D72 and E140. CTP-binding positions include 147-149 (DIE), 187-192 (KTKPTQ), and K223. Residues 187–192 (KTKPTQ) and K223 contribute to the UTP site. 239-241 (KDV) lines the ATP pocket. The Glutamine amidotransferase type-1 domain occupies 291–542 (TIGMVGKYIE…VKAASEFQKR (252 aa)). G352 lines the L-glutamine pocket. Catalysis depends on C379, which acts as the Nucleophile; for glutamine hydrolysis. Residues 380–383 (LGMQ), E403, and R470 each bind L-glutamine. Residues H515 and E517 contribute to the active site.

It belongs to the CTP synthase family. In terms of assembly, homotetramer.

The catalysed reaction is UTP + L-glutamine + ATP + H2O = CTP + L-glutamate + ADP + phosphate + 2 H(+). The enzyme catalyses L-glutamine + H2O = L-glutamate + NH4(+). It catalyses the reaction UTP + NH4(+) + ATP = CTP + ADP + phosphate + 2 H(+). Its pathway is pyrimidine metabolism; CTP biosynthesis via de novo pathway; CTP from UDP: step 2/2. Allosterically activated by GTP, when glutamine is the substrate; GTP has no effect on the reaction when ammonia is the substrate. The allosteric effector GTP functions by stabilizing the protein conformation that binds the tetrahedral intermediate(s) formed during glutamine hydrolysis. Inhibited by the product CTP, via allosteric rather than competitive inhibition. Functionally, catalyzes the ATP-dependent amination of UTP to CTP with either L-glutamine or ammonia as the source of nitrogen. Regulates intracellular CTP levels through interactions with the four ribonucleotide triphosphates. This is CTP synthase from Shigella boydii serotype 18 (strain CDC 3083-94 / BS512).